Reading from the N-terminus, the 274-residue chain is Sulfur carrier protein FdhD (274 aa).

Cys-121 functions as the Cysteine persulfide intermediate in the catalytic mechanism. A Mo-bis(molybdopterin guanine dinucleotide)-binding site is contributed by 258 to 263; it reads FSKPGR.

Belongs to the FdhD family.

The protein resides in the cytoplasm. Required for formate dehydrogenase (FDH) activity. Acts as a sulfur carrier protein that transfers sulfur from IscS to the molybdenum cofactor prior to its insertion into FDH. This is Sulfur carrier protein FdhD from Yersinia pseudotuberculosis serotype O:3 (strain YPIII).